Consider the following 558-residue polypeptide: Glutamine--tRNA ligase (558 aa).

The short motif at 36 to 46 (PEPNGYLHLGH) is the 'HIGH' region element. ATP contacts are provided by residues 37–39 (EPN) and 43–49 (HLGHAKS). The L-glutamine site is built by Asp-69 and Tyr-214. ATP contacts are provided by residues Thr-233, 263–264 (RL), and 271–273 (LSK). The 'KMSKS' region signature appears at 270–274 (LLSKR).

It belongs to the class-I aminoacyl-tRNA synthetase family. In terms of assembly, monomer.

The protein resides in the cytoplasm. The catalysed reaction is tRNA(Gln) + L-glutamine + ATP = L-glutaminyl-tRNA(Gln) + AMP + diphosphate. In Nitrobacter hamburgensis (strain DSM 10229 / NCIMB 13809 / X14), this protein is Glutamine--tRNA ligase.